Consider the following 3589-residue polypeptide: D-lysergyl-peptide-synthetase subunit 1 (3589 aa).

An adenylation (A) domain 1 region spans residues 344–742; the sequence is NCHSRPDSLA…IGRKDLQVKV (399 aa). One can recognise a Carrier 1 domain in the interval 883-952; that stretch reads VERRLQLLFA…KLRDLAAASS (70 aa). Ser-915 is subject to O-(pantetheine 4'-phosphoryl)serine. The segment at 995–1380 is condensation (C) domain 1; the sequence is EDIYPCTSLQ…SQFQHILTQI (386 aa). Residues 1424 to 1826 are adenylation (A) domain 2; the sequence is QAKAQMQPEA…RRKDSQVKLR (403 aa). Positions 1974–2042 constitute a Carrier 2 domain; sequence LERELQKIWA…TIEKLAAAAV (69 aa). Ser-2006 carries the post-translational modification O-(pantetheine 4'-phosphoryl)serine. The tract at residues 2087–2509 is condensation (C) domain 2; that stretch reads VEDIYPCSPI…IEMLDEEHRS (423 aa). Positions 2534-2929 are adenylation (A) domain 3; the sequence is CLESPESPAI…GRKDDQVKIR (396 aa). Residues 3064-3132 enclose the Carrier 3 domain; that stretch reads LETRLQELVG…RLSELAVVLN (69 aa). An O-(pantetheine 4'-phosphoryl)serine modification is found at Ser-3096. Residues 3187–3585 form a cyclization (Cyc) domain region; sequence TNFIALHFSQ…TYPESLVSEL (399 aa).

It belongs to the NRP synthetase family.

The protein operates within alkaloid biosynthesis; ergot alkaloid biosynthesis. In terms of biological role, D-lysergyl-peptide-synthetase subunit 1; part of the gene cluster that mediates the biosynthesis of fungal ergot alkaloid ergovaline, the predominant ergopeptine product in E.festucae var. lolii. DmaW catalyzes the first step of ergot alkaloid biosynthesis by condensing dimethylallyl diphosphate (DMAP) and tryptophan to form 4-dimethylallyl-L-tryptophan. The second step is catalyzed by the methyltransferase easF that methylates 4-dimethylallyl-L-tryptophan in the presence of S-adenosyl-L-methionine, resulting in the formation of 4-dimethylallyl-L-abrine. The catalase easC and the FAD-dependent oxidoreductase easE then transform 4-dimethylallyl-L-abrine to chanoclavine-I which is further oxidized by easD in the presence of NAD(+), resulting in the formation of chanoclavine-I aldehyde. Agroclavine dehydrogenase easG then mediates the conversion of chanoclavine-I aldehyde to agroclavine via a non-enzymatic adduct reaction: the substrate is an iminium intermediate that is formed spontaneously from chanoclavine-I aldehyde in the presence of glutathione. The presence of easA is not required to complete this reaction. Further conversion of agroclavine to paspalic acid is a two-step process involving oxidation of agroclavine to elymoclavine and of elymoclavine to paspalic acid, the second step being performed by the elymoclavine oxidase cloA. Paspalic acid is then further converted to D-lysergic acid. Ergovaline is assembled from D-lysergic acid and three different amino acids by the D-lysergyl-peptide-synthetase composed of a monomudular (lpsB) and a trimodular (lpsA) nonribosomal peptide synthetase subunit. The chain is D-lysergyl-peptide-synthetase subunit 1 from Epichloe festucae var. lolii (Neotyphodium lolii).